Here is a 258-residue protein sequence, read N- to C-terminus: MLAIISPAKTLDFESAVPKFEFSQPQLTEYSAQLIDVCRQLSPAEIGSLMSISDKLAGLNFARFAEWQKAHTEQNSRAAIYAFKGDVYTGLDVESLSQQDVLFAQQHLRMLSGLYGLLKPLDLMQPYRLEMGTKLVNSKGKDLYAFWGNVITDTLQQAIEAQGDNVLVNLASDEYYKSVKESQLNVRIIKPVFLDNKNGKYKVISFYAKKARGLMCRYIIQNRLSEVEQLKGFDLGGYWFDPTSSSETEFVFKRDVAE.

This sequence belongs to the UPF0246 family.

The polypeptide is UPF0246 protein PM0066 (Pasteurella multocida (strain Pm70)).